The chain runs to 754 residues: Circadian input-output histidine kinase CikA (754 aa).

The tract at residues 1–183 is N-terminal domain, not required to complement the deletion strain; that stretch reads MLAPSSNCSL…QVSAQIRLSL (183 aa). The segment at 184-338 is GAF domain, required to complement the deletion strain; it reads DLSEILTTTI…RDILQHLAEH (155 aa). In terms of domain architecture, Histidine kinase spans 390-611; that stretch reads TMSHELRTPL…TFTVWIPEQT (222 aa). The residue at position 393 (His-393) is a Phosphohistidine; by autocatalysis. Positions 606-754 are psR domain, required to complement the deletion strain and for cell pole localization, attenuates autophosphorylation activity. Binds KaiB(fs); that stretch reads WIPEQTLIEP…NLSEGDRPSS (149 aa). The 114-residue stretch at 629-742 folds into the Response regulatory domain; the sequence is HILLLEEEDE…LLLTTLQGLC (114 aa).

In the N-terminal section; belongs to the phytochrome family. Homodimer. Part of the circadian clock (KaiA, KaiB, KaiC, CikA, RpaA, SasA), the composition of which varies during the circadian cycle. Interacts with LdpA. KaiA and CikA compete for binding to KaiB(fs).

The protein localises to the cytoplasm. The protein resides in the membrane. It carries out the reaction ATP + protein L-histidine = ADP + protein N-phospho-L-histidine.. Functions in an input pathway to the Kai circadian clock. Senses oxidized quinones via its C-terminal pseudo-receiver domain, providing a link between cell metabolism and the clock. Affects the ratio of phosphorylated to unphosphorylated KaiC, binds quinones via its pseudo-receptor domain. Quinone-binding destabilizes the protein rapidly. Autophosphorylates, does not transfer the phosphate to its pseudo-receiver (PsR) domain. May play a role in cell division, as suggested by its polar location and increased cell length in a deletion strain. Functionally, member of the two-component regulatory system CikA/RpaA output pathway from the circadian clock, negatively regulating kaiBC expression independently of labA and of sasA. One of three clock output pathways. Dephosphorylates phospho-RpaA, enhanced by KaiB and KaiC, has only modest kinase activity on RpaA. A very robust clock is reconstituted with KaiA, KaiB, KaiC, SasA, CikA and RpaA; output is measured by transcription from an appropriate reporter. In Synechococcus elongatus (strain ATCC 33912 / PCC 7942 / FACHB-805) (Anacystis nidulans R2), this protein is Circadian input-output histidine kinase CikA.